We begin with the raw amino-acid sequence, 150 residues long: Endoribonuclease YbeY (150 aa).

Residues histidine 102, histidine 106, and histidine 112 each contribute to the Zn(2+) site.

It belongs to the endoribonuclease YbeY family. The cofactor is Zn(2+).

Its subcellular location is the cytoplasm. Its function is as follows. Single strand-specific metallo-endoribonuclease involved in late-stage 70S ribosome quality control and in maturation of the 3' terminus of the 16S rRNA. The sequence is that of Endoribonuclease YbeY from Thermotoga maritima (strain ATCC 43589 / DSM 3109 / JCM 10099 / NBRC 100826 / MSB8).